We begin with the raw amino-acid sequence, 338 residues long: MVVMAPRTLFLLLSGALTLTETWAGSHSMRYFSAAVSRPGRGEPRFIAMGYVDDTQFVRFDSDSACPRMEPRAPWVEQEGPEYWEEETRNTKAHAQTDRMNLQTLRGYYNQSEASSHTLQWMIGCDLGSDGRLLRGYEQYAYDGKDYLALNEDLRSWTAADTAAQISKRKCEAANVAEQRRAYLEGTCVEWLHRYLENGKEMLQRADPPKTHVTHHPVFDYEATLRCWALGFYPAEIILTWQRDGEDQTQDVELVETRPAGDGTFQKWAAVVVPSGEEQRYTCHVQHEGLPEPLMLRWKQSSLPTIPIMGIVAGLVVLAAVVTGAAVAAVLWRKKSSD.

A signal peptide spans 1–24 (MVVMAPRTLFLLLSGALTLTETWA). The tract at residues 3–11 (VMAPRTLFL) is VL9 epitope. The segment at 25-114 (GSHSMRYFSA…LRGYYNQSEA (90 aa)) is alpha-1. Over 25–308 (GSHSMRYFSA…KQSSLPTIPI (284 aa)) the chain is Extracellular. The a peptide antigen site is built by Tyr-31, His-94, Asn-101, and Tyr-108. An N-linked (GlcNAc...) asparagine glycan is attached at Asn-110. Residues 115–206 (SSHTLQWMIG…ENGKEMLQRA (92 aa)) are alpha-2. Residues Cys-125 and Cys-188 are joined by a disulfide bond. Residues Ser-167, Lys-170, Gln-179, Arg-180, Tyr-183, and Tyr-195 each coordinate a peptide antigen. The tract at residues 207-298 (DPPKTHVTHH…GLPEPLMLRW (92 aa)) is alpha-3. An Ig-like C1-type domain is found at 209 to 299 (PKTHVTHHPV…LPEPLMLRWK (91 aa)). Cysteines 227 and 283 form a disulfide. The segment at 299-308 (KQSSLPTIPI) is connecting peptide. A helical membrane pass occupies residues 309–332 (MGIVAGLVVLAAVVTGAAVAAVLW). The Cytoplasmic portion of the chain corresponds to 333 to 338 (RKKSSD). Positions 334-336 (KKS) match the ER-retrieval signal motif.

The protein belongs to the MHC class I family. As to quaternary structure, forms a heterotrimer with B2M and a self-peptide (peptide-bound HLA-G-B2M). HLA-G-B2M complex interacts with components of the antigen processing machinery TAPBP and TAP1-TAP2 complex; this interaction is required for loading of high affinity peptides and heterotrimer translocation to the cell surface. Interacts with CALCR; this interaction is required for appropriate folding. Interacts with COPB1; this interaction mediates the endoplasmic reticulum (ER) retrieval of HLA-G-B2M complexes that bind low affinity peptides. On the cell surface, peptide-bound HLA-G-B2M molecules (referred to as monomers) can form disulfide-linked homomultimers, homodimers and homotrimers. Interacts with KIR2DL4; this interaction is direct. Interacts with LILRB1 and LILRB2 receptors; this interaction is direct. Interacts with CD160; this interactions is direct. Interacts with CD8A homodimer; this interaction is direct and might down-regulate T cell receptor signaling. Isoform 2: Forms a non-disulfide-linked homodimer and interacts with LILRB2. N-glycosylated. Post-translationally, produced by proteolytic cleavage at the cell surface (shedding) by matrix metalloproteinase MMP2. Expressed in adult eye. Expressed in immune cell subsets including monocytes, myeloid and plasmacytoid dendritic cells and regulatory T cells (Tr1)(at protein level). Secreted by follicular dendritic cell and follicular helper T cells. In terms of tissue distribution, detected in physiological fluids including amniotic fluid and serum. As to expression, expressed in placenta, amniotic membrane, skin, cord blood and peripheral blood mononuclear cells.

Its subcellular location is the cell membrane. The protein resides in the endoplasmic reticulum membrane. It localises to the early endosome membrane. The protein localises to the secreted. It is found in the early endosome. Its subcellular location is the cell projection. The protein resides in the filopodium membrane. Non-classical major histocompatibility class Ib molecule involved in immune regulatory processes at the maternal-fetal interface. In complex with B2M/beta-2 microglobulin binds a limited repertoire of nonamer self-peptides derived from intracellular proteins including histones and ribosomal proteins. Peptide-bound HLA-G-B2M complex acts as a ligand for inhibitory/activating KIR2DL4, LILRB1 and LILRB2 receptors on uterine immune cells to promote fetal development while maintaining maternal-fetal tolerance. Upon interaction with KIR2DL4 and LILRB1 receptors on decidual NK cells, it triggers NK cell senescence-associated secretory phenotype as a molecular switch to promote vascular remodeling and fetal growth in early pregnancy. Through interaction with KIR2DL4 receptor on decidual macrophages induces pro-inflammatory cytokine production mainly associated with tissue remodeling. Through interaction with LILRB2 receptor triggers differentiation of type 1 regulatory T cells and myeloid-derived suppressor cells, both of which actively maintain maternal-fetal tolerance. May play a role in balancing tolerance and antiviral-immunity at maternal-fetal interface by keeping in check the effector functions of NK, CD8+ T cells and B cells. Reprograms B cells toward an immune suppressive phenotype via LILRB1. May induce immune activation/suppression via intercellular membrane transfer (trogocytosis), likely enabling interaction with KIR2DL4, which resides mostly in endosomes. Through interaction with the inhibitory receptor CD160 on endothelial cells may control angiogenesis in immune privileged sites. Functionally, likely does not bind B2M and presents peptides. Negatively regulates NK cell- and CD8+ T cell-mediated cytotoxicity. Its function is as follows. Non-classical major histocompatibility class Ib molecule involved in immune regulatory processes at the maternal-fetal interface. In complex with B2M/beta-2 microglobulin binds a limited repertoire of nonamer self-peptides derived from intracellular proteins including histones and ribosomal proteins. Peptide-bound HLA-G-B2M complex acts as a ligand for inhibitory/activating KIR2DL4, LILRB1 and LILRB2 receptors on uterine immune cells to promote fetal development while maintaining maternal-fetal tolerance. Upon interaction with KIR2DL4 and LILRB1 receptors on decidual NK cells, it triggers NK cell senescence-associated secretory phenotype as a molecular switch to promote vascular remodeling and fetal growth in early pregnancy. Through interaction with KIR2DL4 receptor on decidual macrophages induces pro-inflammatory cytokine production mainly associated with tissue remodeling. Through interaction with LILRB2 receptor triggers differentiation of type 1 regulatory T cells and myeloid-derived suppressor cells, both of which actively maintain maternal-fetal tolerance. Reprograms B cells toward an immune suppressive phenotype via LILRB1. In terms of biological role, likely does not bind B2M and presents peptides. This Homo sapiens (Human) protein is HLA class I histocompatibility antigen, alpha chain G.